Consider the following 288-residue polypeptide: Bifunctional protein FolD (288 aa).

Residues 171–173, S196, and T237 contribute to the NADP(+) site; that span reads GRS.

It belongs to the tetrahydrofolate dehydrogenase/cyclohydrolase family. Homodimer.

It catalyses the reaction (6R)-5,10-methylene-5,6,7,8-tetrahydrofolate + NADP(+) = (6R)-5,10-methenyltetrahydrofolate + NADPH. It carries out the reaction (6R)-5,10-methenyltetrahydrofolate + H2O = (6R)-10-formyltetrahydrofolate + H(+). It functions in the pathway one-carbon metabolism; tetrahydrofolate interconversion. In terms of biological role, catalyzes the oxidation of 5,10-methylenetetrahydrofolate to 5,10-methenyltetrahydrofolate and then the hydrolysis of 5,10-methenyltetrahydrofolate to 10-formyltetrahydrofolate. The protein is Bifunctional protein FolD of Elusimicrobium minutum (strain Pei191).